The primary structure comprises 697 residues: Elongation factor G (697 aa).

Residues 8–282 (ENTRNIGIMA…AIVDYMPSPV (275 aa)) form the tr-type G domain. GTP is bound by residues 17–24 (AHIDAGKT), 81–85 (DTPGH), and 135–138 (NKMD).

The protein belongs to the TRAFAC class translation factor GTPase superfamily. Classic translation factor GTPase family. EF-G/EF-2 subfamily.

The protein resides in the cytoplasm. In terms of biological role, catalyzes the GTP-dependent ribosomal translocation step during translation elongation. During this step, the ribosome changes from the pre-translocational (PRE) to the post-translocational (POST) state as the newly formed A-site-bound peptidyl-tRNA and P-site-bound deacylated tRNA move to the P and E sites, respectively. Catalyzes the coordinated movement of the two tRNA molecules, the mRNA and conformational changes in the ribosome. This Acetivibrio thermocellus (strain ATCC 27405 / DSM 1237 / JCM 9322 / NBRC 103400 / NCIMB 10682 / NRRL B-4536 / VPI 7372) (Clostridium thermocellum) protein is Elongation factor G.